A 186-amino-acid chain; its full sequence is Transcriptional repressor NrdR (186 aa).

The segment at 1–24 is disordered; it reads MRCPYCGGLDTQVKDSRPSDDASA. A zinc finger spans residues 3–34; the sequence is CPYCGGLDTQVKDSRPSDDASAIRRRRICPDC. Over residues 12–24 the composition is skewed to basic and acidic residues; the sequence is QVKDSRPSDDASA. Positions 49-139 constitute an ATP-cone domain; that stretch reads LTVVKRSGRR…VYKNFREARD (91 aa). The interval 146-186 is disordered; it reads RLNGAGRPGGEPEPPDEAAPGPAAAPGEGGEAPARRARSRA.

This sequence belongs to the NrdR family. Zn(2+) is required as a cofactor.

Negatively regulates transcription of bacterial ribonucleotide reductase nrd genes and operons by binding to NrdR-boxes. This is Transcriptional repressor NrdR from Methylobacterium sp. (strain 4-46).